The sequence spans 347 residues: Heat-inducible transcription repressor HrcA (347 aa).

It belongs to the HrcA family.

Functionally, negative regulator of class I heat shock genes (grpE-dnaK-dnaJ and groELS operons). Prevents heat-shock induction of these operons. The polypeptide is Heat-inducible transcription repressor HrcA (Sorangium cellulosum (strain So ce56) (Polyangium cellulosum (strain So ce56))).